A 185-amino-acid polypeptide reads, in one-letter code: Elongation factor P (185 aa).

Belongs to the elongation factor P family.

The protein localises to the cytoplasm. Its pathway is protein biosynthesis; polypeptide chain elongation. In terms of biological role, involved in peptide bond synthesis. Stimulates efficient translation and peptide-bond synthesis on native or reconstituted 70S ribosomes in vitro. Probably functions indirectly by altering the affinity of the ribosome for aminoacyl-tRNA, thus increasing their reactivity as acceptors for peptidyl transferase. This is Elongation factor P from Metamycoplasma arthritidis (strain 158L3-1) (Mycoplasma arthritidis).